A 487-amino-acid chain; its full sequence is Probable UDP-N-acetylglucosamine pyrophosphorylase (487 aa).

The short motif at 105 to 108 is the Substrate binding element; the sequence is LAGG. UTP contacts are provided by residues 105 to 108, lysine 119, glutamine 198, and glycine 225; that span reads LAGG. Position 226 (asparagine 226) interacts with substrate. Residue aspartate 256 coordinates UTP. The Substrate binding motif lies at 307–308; sequence EY. Lysine 382 provides a ligand contact to UTP. Lysine 412 serves as a coordination point for substrate.

It belongs to the UDPGP type 1 family.

Its subcellular location is the cytoplasm. The enzyme catalyses N-acetyl-alpha-D-glucosamine 1-phosphate + UTP + H(+) = UDP-N-acetyl-alpha-D-glucosamine + diphosphate. The protein operates within nucleotide-sugar biosynthesis; UDP-N-acetyl-alpha-D-glucosamine biosynthesis; UDP-N-acetyl-alpha-D-glucosamine from N-acetyl-alpha-D-glucosamine 1-phosphate: step 1/1. This is Probable UDP-N-acetylglucosamine pyrophosphorylase (uap1) from Dictyostelium discoideum (Social amoeba).